Consider the following 182-residue polypeptide: Superoxide dismutase [Cu-Zn] (182 aa).

Positions 1–19 (MFRTLTVVPLLALGLSLSA) are cleaved as a signal peptide. Cys20 is lipidated: N-palmitoyl cysteine. Cys20 carries S-diacylglycerol cysteine lipidation. Positions 69, 71, and 95 each coordinate Cu cation. Residues Cys76 and Cys175 are joined by a disulfide bond. Residues 91-118 (AAGGHFDPGASHNHDGPHARNDQGHGGD) are disordered. Zn(2+) contacts are provided by His95, His104, His115, and Asp118. Residues 102 to 115 (HNHDGPHARNDQGH) show a composition bias toward basic and acidic residues.

This sequence belongs to the Cu-Zn superoxide dismutase family. Requires Cu cation as cofactor. It depends on Zn(2+) as a cofactor.

It is found in the cell membrane. It carries out the reaction 2 superoxide + 2 H(+) = H2O2 + O2. In terms of biological role, destroys radicals which are normally produced within the cells and which are toxic to biological systems. The polypeptide is Superoxide dismutase [Cu-Zn] (sodC) (Deinococcus radiodurans (strain ATCC 13939 / DSM 20539 / JCM 16871 / CCUG 27074 / LMG 4051 / NBRC 15346 / NCIMB 9279 / VKM B-1422 / R1)).